A 383-amino-acid polypeptide reads, in one-letter code: uncharacterized protein (383 aa).

The protein belongs to the peptidase M20 family.

This is an uncharacterized protein from Staphylococcus aureus (strain MRSA252).